Reading from the N-terminus, the 862-residue chain is Eukaryotic translation initiation factor 3 subunit C (862 aa).

A disordered region spans residues 1 to 81; it reads MSSRFFYGGG…EEEEKVTVVK (81 aa). Positions 17-54 are enriched in acidic residues; it reads SSDEEELYSDREEEEKSEEEESSEEEDETSEEEESDEE. Over residues 55-65 the composition is skewed to basic and acidic residues; sequence TGARKFLKDVA. A compositionally biased stretch (acidic residues) spans 66-75; sequence SDSEEEEEEE. The 175-residue stretch at 600-774 folds into the PCI domain; that stretch reads FHMHINLELL…NAIVFRKGVE (175 aa). Residues 813 to 862 are disordered; the sequence is RDQGAGARGGRGSGRGGQARGGPRFPGGQQGRRPGGQQFGGGALGGAIKA. The span at 818–862 shows a compositional bias: gly residues; sequence GARGGRGSGRGGQARGGPRFPGGQQGRRPGGQQFGGGALGGAIKA.

It belongs to the eIF-3 subunit C family. In terms of assembly, component of the eukaryotic translation initiation factor 3 (eIF-3) complex.

The protein localises to the cytoplasm. Its function is as follows. Component of the eukaryotic translation initiation factor 3 (eIF-3) complex, which is involved in protein synthesis of a specialized repertoire of mRNAs and, together with other initiation factors, stimulates binding of mRNA and methionyl-tRNAi to the 40S ribosome. The eIF-3 complex specifically targets and initiates translation of a subset of mRNAs involved in cell proliferation. The sequence is that of Eukaryotic translation initiation factor 3 subunit C (nip1) from Aspergillus fumigatus (strain CBS 144.89 / FGSC A1163 / CEA10) (Neosartorya fumigata).